Consider the following 392-residue polypeptide: Probable tRNA sulfurtransferase (392 aa).

Residues 60 to 162 (QQVINDLQQV…HDCAIVYGHK (103 aa)) form the THUMP domain. ATP contacts are provided by residues 180–181 (LL), 205–206 (TF), Arg-264, Gly-286, and Gln-295.

It belongs to the ThiI family.

It is found in the cytoplasm. It carries out the reaction [ThiI sulfur-carrier protein]-S-sulfanyl-L-cysteine + a uridine in tRNA + 2 reduced [2Fe-2S]-[ferredoxin] + ATP + H(+) = [ThiI sulfur-carrier protein]-L-cysteine + a 4-thiouridine in tRNA + 2 oxidized [2Fe-2S]-[ferredoxin] + AMP + diphosphate. The catalysed reaction is [ThiS sulfur-carrier protein]-C-terminal Gly-Gly-AMP + S-sulfanyl-L-cysteinyl-[cysteine desulfurase] + AH2 = [ThiS sulfur-carrier protein]-C-terminal-Gly-aminoethanethioate + L-cysteinyl-[cysteine desulfurase] + A + AMP + 2 H(+). The protein operates within cofactor biosynthesis; thiamine diphosphate biosynthesis. Its function is as follows. Catalyzes the ATP-dependent transfer of a sulfur to tRNA to produce 4-thiouridine in position 8 of tRNAs, which functions as a near-UV photosensor. Also catalyzes the transfer of sulfur to the sulfur carrier protein ThiS, forming ThiS-thiocarboxylate. This is a step in the synthesis of thiazole, in the thiamine biosynthesis pathway. The sulfur is donated as persulfide by IscS. This chain is Probable tRNA sulfurtransferase, found in Ureaplasma urealyticum serovar 10 (strain ATCC 33699 / Western).